Reading from the N-terminus, the 170-residue chain is Microfibrillar-associated protein 5 (170 aa).

The first 20 residues, 1–20 (MTFFGPKVLLLLTALIMSSG), serve as a signal peptide directing secretion. The Cell attachment site motif lies at 30 to 32 (RGD). The N-linked (GlcNAc...) asparagine glycan is linked to Asn76.

It belongs to the MFAP family. Interacts with TGFB2. Interacts with BMP2. Interacts with FBN1 (via N-terminal domain) and FBN2. Forms intermolecular disulfide bonds either with other MAGP-2 molecules or with other components of the microfibrils. In terms of tissue distribution, associated with fibrillin-containing microfibrils of the developing nuchal ligament.

It localises to the secreted. The protein resides in the extracellular space. Its subcellular location is the extracellular matrix. Its function is as follows. May play a role in hematopoiesis. In the cardiovascular system, could regulate growth factors or participate in cell signaling in maintaining large vessel integrity. Component of the elastin-associated microfibrils. The polypeptide is Microfibrillar-associated protein 5 (MFAP5) (Bos taurus (Bovine)).